The sequence spans 547 residues: Serine/threonine-protein kinase pkn3 (547 aa).

One can recognise a Protein kinase domain in the interval 18–288; sequence YRVEALIGEG…EAFKAELQAV (271 aa). ATP is bound by residues 24-32 and Lys47; that span reads IGEGGMGKV. Asp142 (proton acceptor) is an active-site residue. A compositionally biased stretch (basic and acidic residues) spans 290 to 299; it reads KERRRMDSAP. Residues 290 to 327 form a disordered region; it reads KERRRMDSAPRRSANSSAVLAPLPRKSAASPQSDVRDA.

This sequence belongs to the protein kinase superfamily. Ser/Thr protein kinase family.

The catalysed reaction is L-seryl-[protein] + ATP = O-phospho-L-seryl-[protein] + ADP + H(+). It carries out the reaction L-threonyl-[protein] + ATP = O-phospho-L-threonyl-[protein] + ADP + H(+). This chain is Serine/threonine-protein kinase pkn3 (pkn3), found in Myxococcus xanthus.